Here is a 141-residue protein sequence, read N- to C-terminus: Nucleoside diphosphate kinase (141 aa).

Lysine 10, phenylalanine 58, arginine 86, threonine 92, arginine 103, and asparagine 113 together coordinate ATP. The Pros-phosphohistidine intermediate role is filled by histidine 116.

Belongs to the NDK family. Homotetramer. Requires Mg(2+) as cofactor.

The protein localises to the cytoplasm. The catalysed reaction is a 2'-deoxyribonucleoside 5'-diphosphate + ATP = a 2'-deoxyribonucleoside 5'-triphosphate + ADP. It catalyses the reaction a ribonucleoside 5'-diphosphate + ATP = a ribonucleoside 5'-triphosphate + ADP. Major role in the synthesis of nucleoside triphosphates other than ATP. The ATP gamma phosphate is transferred to the NDP beta phosphate via a ping-pong mechanism, using a phosphorylated active-site intermediate. The sequence is that of Nucleoside diphosphate kinase from Ehrlichia canis (strain Jake).